A 644-amino-acid polypeptide reads, in one-letter code: Chaperone protein DnaK (644 aa).

At T199 the chain carries Phosphothreonine; by autocatalysis. Residues 605-644 (KKSSEGQAAQGQTQSQESTKPAEEGVVDAEFEEVKEEDKK) are disordered. The segment covering 609–623 (EGQAAQGQTQSQEST) has biased composition (polar residues). Positions 629-644 (GVVDAEFEEVKEEDKK) are enriched in acidic residues.

The protein belongs to the heat shock protein 70 family.

In terms of biological role, acts as a chaperone. In Legionella pneumophila subsp. pneumophila (strain Philadelphia 1 / ATCC 33152 / DSM 7513), this protein is Chaperone protein DnaK.